Reading from the N-terminus, the 1139-residue chain is Solute carrier family 12 member 5 (1139 aa).

2 disordered regions span residues Met1–Glu62 and Pro95–Gln116. The Cytoplasmic segment spans residues Met1–Ser98. Residues Pro21 to Pro45 show a composition bias toward basic and acidic residues. Polar residues predominate over residues Lys46–Thr55. Thr57 bears the Phosphothreonine mark. Positions Ser98–Lys111 are enriched in basic and acidic residues. The discontinuously helical transmembrane segment at Lys99–Met120 threads the bilayer. Lys113 is a K(+) binding site. Over Gly121–Pro129 the chain is Extracellular. The chain crosses the membrane as a helical span at residues Cys130–Gly151. Residues Ile152–Ser174 lie on the Cytoplasmic side of the membrane. A helical transmembrane segment spans residues Ala175–Val203. Ala184 is a chloride binding site. At Gly204–Tyr229 the chain is on the extracellular side. The next 2 membrane-spanning stretches (helical) occupy residues Leu230–Leu250 and Asn251–Asn276. Topologically, residues Lys277–Leu402 are extracellular. A disulfide bridge links Cys310 with Cys325. N-linked (GlcNAc...) asparagine glycosylation is found at Asn314, Asn333, Asn351, and Asn362. Cys345 and Cys354 are joined by a disulfide. A helical membrane pass occupies residues Ala403–Thr420. Met410 lines the K(+) pocket. Residues Tyr414 and Val415 each contribute to the chloride site. Topologically, residues Ser421–Ile429 are cytoplasmic. A helical transmembrane segment spans residues Tyr430–Ser453. Asp446 provides a ligand contact to K(+). Topologically, residues Ile454 to Leu485 are extracellular. Residues Arg486–Gly513 traverse the membrane as a helical segment. The Cytoplasmic portion of the chain corresponds to Ser514 to Gln534. The next 2 helical transmembrane spans lie at Ala535–Gly555 and Glu556–Asp578. Glu569 serves as a coordination point for chloride. Over Glu579–Tyr592 the chain is Cytoplasmic. A run of 2 helical transmembrane segments spans residues Met593–Arg615 and Tyr616–Leu632. The Cytoplasmic portion of the chain corresponds to Met633–Ser1139. The segment at Gly667–Leu681 is scissor helix. Thr929 carries the post-translational modification Phosphothreonine; by OXSR1 and STK39. The segment at His943–Glu1025 is disordered. Over residues Thr945–Gly962 the composition is skewed to basic and acidic residues. Positions Thr982–Val994 are enriched in acidic residues. Residues Pro1003 to Pro1012 are compositionally biased toward low complexity. Thr1030 carries the post-translational modification Phosphothreonine; by OXSR1 and STK39. Residues Lys1033–Ile1052 form a disordered region. Ser1045, Ser1048, and Ser1049 each carry phosphoserine.

The protein belongs to the SLC12A transporter family. K/Cl co-transporter subfamily. As to quaternary structure, homodimer; adopts a domain-swap conformation at the scissor helices connecting the transmembrane domain and C-terminal domain. Heterodimer wHeterodimer with K-Cl cotransporters SLC12A6 and SLC12A7. Interacts with AP2A1. In terms of processing, phosphorylated at Thr-929 and Thr-1030 by OXSR1/OSR1 and STK39/SPAK downstream of WNK kinases (WNK1, WNK2, WNK3 or WNK4), inhibiting the potassium-chloride cotransport activity. In terms of tissue distribution, highly expressed in brain. Not detected in other tissues. Highly expressed in pyramidal neurons and in neurons throughout the cortex, hippocampus, the granular layer of the cerebellum and in groups of neurons throughout the brainstem. Barely detectable in dorsal-root ganglions.

It localises to the cell membrane. It is found in the cell projection. The protein resides in the dendrite. It carries out the reaction K(+)(in) + chloride(in) = K(+)(out) + chloride(out). Inhibited following phosphorylation by OXSR1/OSR1 and STK39/SPAK: phosphorylation takes place downstream of WNK kinases (WNK1, WNK2, WNK3 or WNK4) in response to hyperosmotic stress and subsequent cell shrinkage. Its function is as follows. Mediates electroneutral potassium-chloride cotransport in mature neurons and is required for neuronal Cl(-) homeostasis. As major extruder of intracellular chloride, it establishes the low neuronal Cl(-) levels required for chloride influx after binding of GABA-A and glycine to their receptors, with subsequent hyperpolarization and neuronal inhibition. Involved in the regulation of dendritic spine formation and maturation. This chain is Solute carrier family 12 member 5 (Slc12a5), found in Rattus norvegicus (Rat).